The primary structure comprises 186 residues: Transposon Tn21 resolvase (186 aa).

Positions 4-137 (QRIGYIRVST…EGIALAKQRG (134 aa)) constitute a Resolvase/invertase-type recombinase catalytic domain. S12 functions as the O-(5'-phospho-DNA)-serine intermediate in the catalytic mechanism. The segment at residues 164-183 (KTKLAREFGISRETLYQYLR) is a DNA-binding region (H-T-H motif).

Belongs to the site-specific recombinase resolvase family.

Functionally, resolvase catalyzes the resolution (a site-specific recombination) of the cointegrated replicon to yield the final transposition products. The polypeptide is Transposon Tn21 resolvase (tnpR) (Escherichia coli).